The chain runs to 120 residues: NAD(P)H-quinone oxidoreductase subunit 3 (120 aa).

The next 3 helical transmembrane spans lie at 10–30 (FLGFLIIAAAVPILALVTNLI), 64–84 (MFALVFVIFDVETVFLYPWAV), and 89–109 (LGLLAFIEALIFITILVIALA).

The protein belongs to the complex I subunit 3 family. In terms of assembly, NDH-1 can be composed of about 15 different subunits; different subcomplexes with different compositions have been identified which probably have different functions.

The protein resides in the cellular thylakoid membrane. It catalyses the reaction a plastoquinone + NADH + (n+1) H(+)(in) = a plastoquinol + NAD(+) + n H(+)(out). The catalysed reaction is a plastoquinone + NADPH + (n+1) H(+)(in) = a plastoquinol + NADP(+) + n H(+)(out). In terms of biological role, NDH-1 shuttles electrons from an unknown electron donor, via FMN and iron-sulfur (Fe-S) centers, to quinones in the respiratory and/or the photosynthetic chain. The immediate electron acceptor for the enzyme in this species is believed to be plastoquinone. Couples the redox reaction to proton translocation, and thus conserves the redox energy in a proton gradient. Cyanobacterial NDH-1 also plays a role in inorganic carbon-concentration. In Prochlorococcus marinus subsp. pastoris (strain CCMP1986 / NIES-2087 / MED4), this protein is NAD(P)H-quinone oxidoreductase subunit 3.